The following is a 351-amino-acid chain: MYGFEALTFNIHGGYLEAIVRGHRAGLLTTADYNNLCQCENLDDIKMHLSATKYGSYLQNEPSPLHTTTIVEKCTLKLVDDYKHMLCQATEPMSTFLEYIRYGHMIDNVVLIVTGTLHERDVQELIEKCHPLGMFDSIATLAVAQNMRELYRLVLVDTPLAPYFSECLTSEDLDDMNIEIMRNTLYKAYLEDFYKFCQKLGGATAEIMSDLLAFEADRRAVNITINSIGTELTREDRKKLYSNFGLLYPYGHEELAICEDIDQVRGVMEKYPPYQAIFSKMSYGESQMLDKAFYEEEVRRLCLAFEQQFHYAVFFAYMRLREQEIRNLMWISECVAQNQKSRIHDSVVYMF.

This sequence belongs to the V-ATPase V0D/AC39 subunit family. V-ATPase is a heteromultimeric enzyme composed of a peripheral catalytic V1 complex (components A to H) attached to an integral membrane V0 proton pore complex (components: a, c, c'', d and e).

Its subcellular location is the vacuole membrane. Functionally, subunit of the integral membrane V0 complex of vacuolar ATPase. Vacuolar ATPase is responsible for acidifying a variety of intracellular compartments in eukaryotic cells, thus providing most of the energy required for transport processes in the vacuolar system. In Arabidopsis thaliana (Mouse-ear cress), this protein is V-type proton ATPase subunit d1 (VHA-d1).